Consider the following 287-residue polypeptide: uncharacterized protein (287 aa).

Belongs to the AllH family.

This is an uncharacterized protein from Escherichia coli (strain K12).